We begin with the raw amino-acid sequence, 141 residues long: Sperm-associated microtubule inner protein 10 (141 aa).

Positions 1-16 (MASEKDDGPALPKLDD) are enriched in basic and acidic residues. The interval 1–33 (MASEKDDGPALPKLDDDNQTAENTCKPAEEQPQ) is disordered.

Microtubule inner protein component of sperm flagellar doublet microtubules. As to expression, expressed predominantly in the testis.

The protein resides in the cytoplasm. It is found in the cytoskeleton. It localises to the flagellum axoneme. Functionally, microtubule inner protein (MIP) part of the dynein-decorated doublet microtubules (DMTs) in flagellum axoneme, which is required for flagellum beating. May serve to reinforce and thus stabilize the microtubule structure in the sperm flagella. Involved in the regulation of sperm motility. This chain is Sperm-associated microtubule inner protein 10 (Spmip10), found in Mus musculus (Mouse).